A 203-amino-acid chain; its full sequence is Large ribosomal subunit protein bL25 (203 aa).

Belongs to the bacterial ribosomal protein bL25 family. CTC subfamily. Part of the 50S ribosomal subunit; part of the 5S rRNA/L5/L18/L25 subcomplex. Contacts the 5S rRNA. Binds to the 5S rRNA independently of L5 and L18.

In terms of biological role, this is one of the proteins that binds to the 5S RNA in the ribosome where it forms part of the central protuberance. The protein is Large ribosomal subunit protein bL25 of Xanthobacter autotrophicus (strain ATCC BAA-1158 / Py2).